Consider the following 268-residue polypeptide: 4-hydroxy-tetrahydrodipicolinate reductase (268 aa).

Residues 9-14 (GAAGRM), 99-101 (GTT), and 123-126 (ASNF) contribute to the NAD(+) site. Catalysis depends on histidine 156, which acts as the Proton donor/acceptor. Histidine 157 contacts (S)-2,3,4,5-tetrahydrodipicolinate. Residue lysine 160 is the Proton donor of the active site. 166–167 (GT) provides a ligand contact to (S)-2,3,4,5-tetrahydrodipicolinate.

This sequence belongs to the DapB family.

It localises to the cytoplasm. The catalysed reaction is (S)-2,3,4,5-tetrahydrodipicolinate + NAD(+) + H2O = (2S,4S)-4-hydroxy-2,3,4,5-tetrahydrodipicolinate + NADH + H(+). It carries out the reaction (S)-2,3,4,5-tetrahydrodipicolinate + NADP(+) + H2O = (2S,4S)-4-hydroxy-2,3,4,5-tetrahydrodipicolinate + NADPH + H(+). It functions in the pathway amino-acid biosynthesis; L-lysine biosynthesis via DAP pathway; (S)-tetrahydrodipicolinate from L-aspartate: step 4/4. Functionally, catalyzes the conversion of 4-hydroxy-tetrahydrodipicolinate (HTPA) to tetrahydrodipicolinate. In Saccharophagus degradans (strain 2-40 / ATCC 43961 / DSM 17024), this protein is 4-hydroxy-tetrahydrodipicolinate reductase.